Consider the following 492-residue polypeptide: Cytochrome P450 2A1 (492 aa).

Residue S130 is modified to Phosphoserine. Heme is bound at residue C437.

It belongs to the cytochrome P450 family. Heme is required as a cofactor. As to expression, liver and testis.

It is found in the endoplasmic reticulum membrane. The protein localises to the microsome membrane. It catalyses the reaction an organic molecule + reduced [NADPH--hemoprotein reductase] + O2 = an alcohol + oxidized [NADPH--hemoprotein reductase] + H2O + H(+). Highly active in the 7-alpha-hydroxylation of testosterone, progesterone and androstenedione. The sequence is that of Cytochrome P450 2A1 (Cyp2a1) from Rattus norvegicus (Rat).